Here is a 149-residue protein sequence, read N- to C-terminus: MDRTFVMVKPDGVQRGLVGEIVSRFEAKGLKLVGAKLELLPEGRVVEQYREHLEKPFFPGLKAYIMSGPCFLMAWEGKGVVAVVRRMVGATNPAEAAPGSIRGNFALDIGRNVIHASDSPESAARELGIHFAAGELVDYSRIDEPVLYE.

ATP-binding residues include Lys-9, Phe-57, Arg-85, Thr-91, Arg-102, and Asn-112. The Pros-phosphohistidine intermediate role is filled by His-115.

This sequence belongs to the NDK family. Mg(2+) is required as a cofactor.

It localises to the cytoplasm. The catalysed reaction is a 2'-deoxyribonucleoside 5'-diphosphate + ATP = a 2'-deoxyribonucleoside 5'-triphosphate + ADP. It catalyses the reaction a ribonucleoside 5'-diphosphate + ATP = a ribonucleoside 5'-triphosphate + ADP. Major role in the synthesis of nucleoside triphosphates other than ATP. The ATP gamma phosphate is transferred to the NDP beta phosphate via a ping-pong mechanism, using a phosphorylated active-site intermediate. The chain is Nucleoside diphosphate kinase from Methanoculleus marisnigri (strain ATCC 35101 / DSM 1498 / JR1).